The sequence spans 536 residues: CTP synthase (536 aa).

The tract at residues M1 to I266 is amidoligase domain. S14 serves as a coordination point for CTP. S14 provides a ligand contact to UTP. ATP is bound by residues S15–L20 and D72. The Mg(2+) site is built by D72 and E140. CTP contacts are provided by residues D147–E149, K187–Q192, and K223. Residues K187–Q192 and K223 contribute to the UTP site. Positions R292–K534 constitute a Glutamine amidotransferase type-1 domain. Residue G354 participates in L-glutamine binding. C381 acts as the Nucleophile; for glutamine hydrolysis in catalysis. L-glutamine is bound by residues L382–Q385, E405, and R462. Catalysis depends on residues H507 and E509.

Belongs to the CTP synthase family. In terms of assembly, homotetramer.

It catalyses the reaction UTP + L-glutamine + ATP + H2O = CTP + L-glutamate + ADP + phosphate + 2 H(+). The enzyme catalyses L-glutamine + H2O = L-glutamate + NH4(+). It carries out the reaction UTP + NH4(+) + ATP = CTP + ADP + phosphate + 2 H(+). The protein operates within pyrimidine metabolism; CTP biosynthesis via de novo pathway; CTP from UDP: step 2/2. With respect to regulation, allosterically activated by GTP, when glutamine is the substrate; GTP has no effect on the reaction when ammonia is the substrate. The allosteric effector GTP functions by stabilizing the protein conformation that binds the tetrahedral intermediate(s) formed during glutamine hydrolysis. Inhibited by the product CTP, via allosteric rather than competitive inhibition. Catalyzes the ATP-dependent amination of UTP to CTP with either L-glutamine or ammonia as the source of nitrogen. Regulates intracellular CTP levels through interactions with the four ribonucleotide triphosphates. This chain is CTP synthase, found in Geobacter sulfurreducens (strain ATCC 51573 / DSM 12127 / PCA).